Consider the following 252-residue polypeptide: 3-dehydroquinate dehydratase (252 aa).

3-dehydroquinate contacts are provided by residues S21, 46–48 (EWR), and R82. H143 acts as the Proton donor/acceptor in catalysis. The active-site Schiff-base intermediate with substrate is K170. Residues R213, S232, and Q236 each coordinate 3-dehydroquinate.

Belongs to the type-I 3-dehydroquinase family. As to quaternary structure, homodimer.

The catalysed reaction is 3-dehydroquinate = 3-dehydroshikimate + H2O. The protein operates within metabolic intermediate biosynthesis; chorismate biosynthesis; chorismate from D-erythrose 4-phosphate and phosphoenolpyruvate: step 3/7. Functionally, involved in the third step of the chorismate pathway, which leads to the biosynthesis of aromatic amino acids. Catalyzes the cis-dehydration of 3-dehydroquinate (DHQ) and introduces the first double bond of the aromatic ring to yield 3-dehydroshikimate. In Escherichia coli (strain SE11), this protein is 3-dehydroquinate dehydratase.